Here is a 173-residue protein sequence, read N- to C-terminus: Protein GrpE (173 aa).

Residues 1–20 (MQDEFKTDTPRTEAGSEKET) show a composition bias toward basic and acidic residues. Residues 1 to 23 (MQDEFKTDTPRTEAGSEKETMPS) are disordered.

It belongs to the GrpE family. In terms of assembly, homodimer.

It localises to the cytoplasm. Its function is as follows. Participates actively in the response to hyperosmotic and heat shock by preventing the aggregation of stress-denatured proteins, in association with DnaK and GrpE. It is the nucleotide exchange factor for DnaK and may function as a thermosensor. Unfolded proteins bind initially to DnaJ; upon interaction with the DnaJ-bound protein, DnaK hydrolyzes its bound ATP, resulting in the formation of a stable complex. GrpE releases ADP from DnaK; ATP binding to DnaK triggers the release of the substrate protein, thus completing the reaction cycle. Several rounds of ATP-dependent interactions between DnaJ, DnaK and GrpE are required for fully efficient folding. The chain is Protein GrpE from Thiobacillus denitrificans (strain ATCC 25259 / T1).